A 336-amino-acid chain; its full sequence is Polyprenyl transferase dpasC (336 aa).

Residues 34–54 form a helical membrane-spanning segment; that stretch reads LFTIFAGGMFLFVASFPTTAF. Asn-66 carries an N-linked (GlcNAc...) asparagine glycan. Transmembrane regions (helical) follow at residues 80–100, 125–145, 181–201, 205–225, 253–273, 274–294, and 311–331; these read ALCL…NDWI, QAML…HFML, YILG…IFHG, FAES…WTIF, HVHL…PMYL, NQFH…LSLL, and LHVD…IELL.

The protein belongs to the UbiA prenyltransferase family. Mg(2+) serves as cofactor.

It localises to the membrane. Its pathway is secondary metabolite biosynthesis; terpenoid biosynthesis. Functionally, polyprenyl transferase; part of the gene cluster that mediates the biosynthesis of the diterpenoid pyrones subglutinols A and B. The first step of the pathway is the synthesis of the alpha-pyrone moiety by the polyketide synthase dpasA via condensation of one acetyl-CoA starter unit with 3 malonyl-CoA units and 2 methylations. The alpha-pyrone is then combined with geranylgeranyl pyrophosphate (GGPP) formed by the GGPP synthase dpasD through the action of the prenyltransferase dpasC to yield a linear alpha-pyrone diterpenoid. Subsequent steps in the diterpenoid pyrone biosynthetic pathway involve the decalin core formation, which is initiated by the epoxidation of the C10-C11 olefin by the FAD-dependent oxidoreductase dpasE, and is followed by a cyclization cascade catalyzed by the terpene cyclase dpasB. The FAD-linked oxidoreductase dpasF is then involved in tetrahydrofuran (THF) ring formation at the C5 unit to complete the formation of subglutinols A and B. DpasF possesses also an additional catalytic ability of multi-step oxidations to generate a new DDP analog with an enone system at the C5 named FDDP A. This chain is Polyprenyl transferase dpasC, found in Apiospora sacchari (Arthrinium sacchari).